The following is a 201-amino-acid chain: Potassium-transporting ATPase KdpC subunit (201 aa).

Residues 9 to 29 (ILVMLALTLITGLLYPLAMTV) form a helical membrane-spanning segment. Polar residues-rich tracts occupy residues 73–84 (TTAADPNDSTKT) and 91–101 (AANSSGSNLGP). The interval 73-103 (TTAADPNDSTKTVPAPYNAANSSGSNLGPTS) is disordered.

It belongs to the KdpC family. The system is composed of three essential subunits: KdpA, KdpB and KdpC.

It localises to the cell inner membrane. Functionally, part of the high-affinity ATP-driven potassium transport (or Kdp) system, which catalyzes the hydrolysis of ATP coupled with the electrogenic transport of potassium into the cytoplasm. This subunit acts as a catalytic chaperone that increases the ATP-binding affinity of the ATP-hydrolyzing subunit KdpB by the formation of a transient KdpB/KdpC/ATP ternary complex. In Bradyrhizobium sp. (strain BTAi1 / ATCC BAA-1182), this protein is Potassium-transporting ATPase KdpC subunit.